The following is a 143-amino-acid chain: Small ribosomal subunit protein uS12 (143 aa).

Basic residues predominate over residues 1–15 (MGKCRGLRTARKLRD). Residues 1 to 27 (MGKCRGLRTARKLRDHRREQKWHDKQY) form a disordered region. The span at 16–27 (HRREQKWHDKQY) shows a compositional bias: basic and acidic residues.

Belongs to the universal ribosomal protein uS12 family. Component of the 40S small ribosomal subunit.

It localises to the cytoplasm. Its subcellular location is the cytosol. It is found in the rough endoplasmic reticulum. The chain is Small ribosomal subunit protein uS12 (rps23) from Ictalurus punctatus (Channel catfish).